A 336-amino-acid chain; its full sequence is MTVRIGVVGTGAIGRDHARRINKVLGGAKIVALSDVNRASAEAVKNDIAPDAVLFATGEELIASPDVEAVLVTSWGATHEQYVLAAIAAGKPCFCEKPLATTAEGARRIVDAEVAHGKRLVQVGFMRRYDAGYVALKQAVDNRIGAPIMVHAAHRNPSVPEQYVTPMAIHDTMIHEIDVLRWLLDDDYVSARVLFPRSAARSHAKLKDPQIVILETAKGTIIDVEIFVNCHYGYDIQCQVVGEDGIASLPEPMSVQTRLGARLQNDILTDWKDRFIASYDVELQDFIHAAAKGTASGPNSWDGYVAAISSDACVAAQETQGAAVAIDLPARPALYQ.

The protein belongs to the Gfo/Idh/MocA family. As to quaternary structure, homotetramer.

The enzyme catalyses myo-inositol + NAD(+) = scyllo-inosose + NADH + H(+). Its function is as follows. Involved in the oxidation of myo-inositol (MI) to 2-keto-myo-inositol (2KMI or 2-inosose). This is Inositol 2-dehydrogenase from Agrobacterium fabrum (strain C58 / ATCC 33970) (Agrobacterium tumefaciens (strain C58)).